Reading from the N-terminus, the 781-residue chain is LPS-assembly protein LptD (781 aa).

Positions 1–24 (MKKNYYTVLSLSILTALYSTSSQA) are cleaved as a signal peptide.

The protein belongs to the LptD family. As to quaternary structure, component of the lipopolysaccharide transport and assembly complex. Interacts with LptE and LptA.

The protein localises to the cell outer membrane. Together with LptE, is involved in the assembly of lipopolysaccharide (LPS) at the surface of the outer membrane. The polypeptide is LPS-assembly protein LptD (Histophilus somni (strain 129Pt) (Haemophilus somnus)).